The chain runs to 964 residues: Phosphoenolpyruvate carboxylase (964 aa).

Residue serine 11 is modified to Phosphoserine. Active-site residues include histidine 172 and lysine 600.

Belongs to the PEPCase type 1 family. In terms of assembly, homotetramer. It depends on Mg(2+) as a cofactor.

The protein localises to the cytoplasm. It catalyses the reaction oxaloacetate + phosphate = phosphoenolpyruvate + hydrogencarbonate. It functions in the pathway photosynthesis; C4 acid pathway. By light-reversible phosphorylation. In terms of biological role, through the carboxylation of phosphoenolpyruvate (PEP) it forms oxaloacetate, a four-carbon dicarboxylic acid source for the tricarboxylic acid cycle. This is Phosphoenolpyruvate carboxylase from Amaranthus hypochondriacus (Prince-of-Wales feather).